The following is a 114-amino-acid chain: Large ribosomal subunit protein uL18 (114 aa).

This sequence belongs to the universal ribosomal protein uL18 family. As to quaternary structure, part of the 50S ribosomal subunit; part of the 5S rRNA/L5/L18/L25 subcomplex. Contacts the 5S and 23S rRNAs.

In terms of biological role, this is one of the proteins that bind and probably mediate the attachment of the 5S RNA into the large ribosomal subunit, where it forms part of the central protuberance. This Azobacteroides pseudotrichonymphae genomovar. CFP2 protein is Large ribosomal subunit protein uL18.